The sequence spans 204 residues: MTAATTSQPAFSPDQVSVIFVLGGPGAGKGTQCEKLVKDYSFVHLSAGDLLRAEQGRAGSQYGELIKNCIKEGQIVPQEITLALLRNAISDNVKANKHKFLIDGFPRKMDQAISFERDIVESKFILFFDCPEDIMLERLLERGKTSGRSDDNIESIKKRFNTFKETSMPVIEYFETKSKVVRVRCDRSVEDVYKDVQDAIRDSL.

Residue 26 to 31 participates in ATP binding; the sequence is GAGKGT. Residues 46–76 form an NMP region; that stretch reads SAGDLLRAEQGRAGSQYGELIKNCIKEGQIV. A ribonucleoside 5'-phosphate is bound by residues Arg-52, 74–76, 104–107, and Gln-111; these read QIV and GFPR. The segment at 141 to 151 is LID; that stretch reads ERGKTSGRSDD. Arg-142 contributes to the ATP binding site. Residues Arg-148 and Arg-159 each contribute to the a ribonucleoside 5'-phosphate site. Arg-187 lines the ATP pocket.

It belongs to the adenylate kinase family. UMP-CMP kinase subfamily. Monomer. The cofactor is Mg(2+).

The protein resides in the cytoplasm. It localises to the nucleus. It catalyses the reaction UMP + ATP = UDP + ADP. Functionally, catalyzes the phosphorylation of pyrimidine nucleoside monophosphates at the expense of ATP. Plays an important role in de novo pyrimidine nucleotide biosynthesis. Has preference for UMP and dUMP as phosphate acceptors, but can also use CMP, dCMP, AMP, GMP, dGMP and dTMP. ATP and dATP are the best phosphate donors, but can also use GTP, dGTP, dCTP, and dTTP to some degree. This is Uridylate kinase from Saccharomyces cerevisiae (strain ATCC 204508 / S288c) (Baker's yeast).